Consider the following 449-residue polypeptide: Glucose-6-phosphate isomerase (449 aa).

Glutamate 291 (proton donor) is an active-site residue. Catalysis depends on residues histidine 312 and lysine 426.

The protein belongs to the GPI family.

Its subcellular location is the cytoplasm. It carries out the reaction alpha-D-glucose 6-phosphate = beta-D-fructose 6-phosphate. It functions in the pathway carbohydrate biosynthesis; gluconeogenesis. Its pathway is carbohydrate degradation; glycolysis; D-glyceraldehyde 3-phosphate and glycerone phosphate from D-glucose: step 2/4. Catalyzes the reversible isomerization of glucose-6-phosphate to fructose-6-phosphate. This Streptococcus pyogenes serotype M28 (strain MGAS6180) protein is Glucose-6-phosphate isomerase.